The chain runs to 361 residues: Septin-2 (361 aa).

Phosphotyrosine is present on Tyr17. Positions 34-306 (KGFEFTLMVV…ENFRSERLKR (273 aa)) constitute a Septin-type G domain. Positions 44–51 (GESGLGKS) are G1 motif. GTP is bound by residues 44–52 (GESGLGKST), Thr78, Gly104, and 183–186 (KADT). The tract at residues 101 to 104 (DTPG) is G3 motif. Residues 182-185 (AKAD) form a G4 motif region. Lys190 carries the N6-acetyllysine modification. Tyr211 is subject to Phosphotyrosine. The residue at position 218 (Ser218) is a Phosphoserine. Positions 241, 256, and 258 each coordinate GTP. The interval 260 to 270 (WGVVEVENPEH) is important for dimerization.

The protein belongs to the TRAFAC class TrmE-Era-EngA-EngB-Septin-like GTPase superfamily. Septin GTPase family. As to quaternary structure, septins polymerize into heterooligomeric protein complexes that form filaments, and associate with cellular membranes, actin filaments and microtubules. GTPase activity is required for filament formation. Septin filaments are assembled from asymmetrical heterotrimers, composed of SEPTIN2, SEPTIN6 and SEPTIN7 that associate head-to-head to form a hexameric unit. Interaction between SEPTIN2 and SEPTIN7 seems indirect. Also interacts with SEPTIN9 and SEPTIN5. Interaction with SEPTIN4 not detected. Component of a septin core octameric complex consisting of SEPTIN12, SEPTIN7, SEPTIN6 and SEPTIN2 or SEPTIN4 in the order 12-7-6-2-2-6-7-12 or 12-7-6-4-4-6-7-12 and located in the sperm annulus. Interacts with MAP4. Interacts with DZIP1L. As to expression, widely expressed.

Its subcellular location is the cytoplasm. It is found in the cytoskeleton. The protein localises to the spindle. It localises to the chromosome. The protein resides in the centromere. Its subcellular location is the kinetochore. It is found in the cleavage furrow. The protein localises to the midbody. It localises to the cell cortex. The protein resides in the cell projection. Its subcellular location is the cilium membrane. It is found in the cilium. The protein localises to the flagellum. Its function is as follows. Filament-forming cytoskeletal GTPase. Forms a filamentous structure with SEPTIN12, SEPTIN6, SEPTIN2 and probably SEPTIN4 at the sperm annulus which is required for the structural integrity and motility of the sperm tail during postmeiotic differentiation. Required for normal organization of the actin cytoskeleton. Plays a role in the biogenesis of polarized columnar-shaped epithelium by maintaining polyglutamylated microtubules, thus facilitating efficient vesicle transport, and by impeding MAP4 binding to tubulin. Required for the progression through mitosis. Forms a scaffold at the midplane of the mitotic splindle required to maintain CENPE localization at kinetochores and consequently chromosome congression. During anaphase, may be required for chromosome segregation and spindle elongation. Plays a role in ciliogenesis and collective cell movements. In cilia, required for the integrity of the diffusion barrier at the base of the primary cilium that prevents diffusion of transmembrane proteins between the cilia and plasma membranes: probably acts by regulating the assembly of the tectonic-like complex (also named B9 complex) by localizing TMEM231 protein. This chain is Septin-2, found in Mus musculus (Mouse).